An 830-amino-acid chain; its full sequence is Protein translocase subunit SecA (830 aa).

Residues glutamine 86, 104-108, and aspartate 491 each bind ATP; that span reads GEGKT. Residues cysteine 813, cysteine 815, cysteine 824, and cysteine 825 each contribute to the Zn(2+) site.

It belongs to the SecA family. As to quaternary structure, monomer and homodimer. Part of the essential Sec protein translocation apparatus which comprises SecA, SecYEG and auxiliary proteins SecDF. Other proteins may also be involved. Zn(2+) is required as a cofactor.

The protein localises to the cell membrane. It is found in the cytoplasm. The enzyme catalyses ATP + H2O + cellular proteinSide 1 = ADP + phosphate + cellular proteinSide 2.. Functionally, part of the Sec protein translocase complex. Interacts with the SecYEG preprotein conducting channel. Has a central role in coupling the hydrolysis of ATP to the transfer of proteins into and across the cell membrane, serving as an ATP-driven molecular motor driving the stepwise translocation of polypeptide chains across the membrane. This is Protein translocase subunit SecA from Syntrophomonas wolfei subsp. wolfei (strain DSM 2245B / Goettingen).